A 285-amino-acid polypeptide reads, in one-letter code: MNSLNKTGLLYIVPTPIGNLSDITYRAVETLKNVNLIAAENIHHTNILLQHYNVKNILISLNKNNEKKQSDYVINELKKGKKIALVSDAGTPVINDPGYFLVKKCCFLNIKIIPLPGPCAAITALSASGISTNRFCYEGFLPSKKKIRRDLLKSLKKEIRTIIFYESKHRILESIKDIIETIDENRYLVIAREITKKWEYIYGAKANIILSWLKEDQSRYKKGEIVIIIDGFKELKNKDISAKAINTLTILRNFLSLKQSVFITSKIHKIKKNDLYQHAIKEKDK.

It belongs to the methyltransferase superfamily. RsmI family.

It is found in the cytoplasm. The catalysed reaction is cytidine(1402) in 16S rRNA + S-adenosyl-L-methionine = 2'-O-methylcytidine(1402) in 16S rRNA + S-adenosyl-L-homocysteine + H(+). Its function is as follows. Catalyzes the 2'-O-methylation of the ribose of cytidine 1402 (C1402) in 16S rRNA. The protein is Ribosomal RNA small subunit methyltransferase I of Buchnera aphidicola subsp. Schizaphis graminum (strain Sg).